The following is a 552-amino-acid chain: MSETETRPTNFIRQIIDEDLKSGKHSSVHTRFPPEPNGYLHIGHAKSICLNFGIAQDYQGQCNLRFDDTNPEKEDIEYVESIKNDVKWLGFDWSGDIHYSSNYFDKLYDYAVELIEKGLAYVDELTSDQIREYRGSLKEPGKNSPYRDRSVEENLALFEQMRDGKFKEGTICLRAKIDMASSFIVMRDPVIYRIRFATHHQTGDKWCIYPMYDFTHCISDALEGITHSICTLEFQDNRRLYDWVLENITIDCQPHQYEFSRLNLEYTIMSKRKLNELVTEKLVNGWDDPRMPTVSGLRRRGFTAGSIREFCKRIGVTKQENMIEFGSLESCIRDDLNENAPRAMAVLEPVKVVIENYEEGKVETLNVANHPNKPEMGTREVPFTREIYIEQDDFREEANKKYKRLVLGKEVRLRGAYVIQANRIEKDEAGNITTIFCSYDTETLGKNPADGRKVKGVIHWVSADKAFPAEIRLYDRLFTVPNSAALEDFSESINPESLITKQGFVEPSLVTAEAEAGYQFERTGYFCIDNKDSTPEALVFNRTVGLRDTWEG.

The 'HIGH' region signature appears at 34-44; that stretch reads PEPNGYLHIGH. Residues 35 to 37 and 41 to 47 each bind ATP; these read EPN and HIGHAKS. L-glutamine is bound by residues Asp-67 and Tyr-212. ATP is bound by residues Thr-231, 261 to 262, and 269 to 271; these read RL and MSK. The 'KMSKS' region motif lies at 268-272; sequence IMSKR.

It belongs to the class-I aminoacyl-tRNA synthetase family. Monomer.

It is found in the cytoplasm. The enzyme catalyses tRNA(Gln) + L-glutamine + ATP = L-glutaminyl-tRNA(Gln) + AMP + diphosphate. This is Glutamine--tRNA ligase from Aliivibrio salmonicida (strain LFI1238) (Vibrio salmonicida (strain LFI1238)).